Here is a 64-residue protein sequence, read N- to C-terminus: Large ribosomal subunit protein bL28 (64 aa).

The interval 1–23 is disordered; the sequence is MARKDQISHRGPLSGNNRSHALN.

Belongs to the bacterial ribosomal protein bL28 family.

The sequence is that of Large ribosomal subunit protein bL28 from Mesomycoplasma hyopneumoniae (strain J / ATCC 25934 / NCTC 10110) (Mycoplasma hyopneumoniae).